The chain runs to 375 residues: Anhydro-N-acetylmuramic acid kinase (375 aa).

Position 19–26 (19–26 (GTSLDGVD)) interacts with ATP.

The protein belongs to the anhydro-N-acetylmuramic acid kinase family.

The enzyme catalyses 1,6-anhydro-N-acetyl-beta-muramate + ATP + H2O = N-acetyl-D-muramate 6-phosphate + ADP + H(+). It functions in the pathway amino-sugar metabolism; 1,6-anhydro-N-acetylmuramate degradation. Its pathway is cell wall biogenesis; peptidoglycan recycling. Catalyzes the specific phosphorylation of 1,6-anhydro-N-acetylmuramic acid (anhMurNAc) with the simultaneous cleavage of the 1,6-anhydro ring, generating MurNAc-6-P. Is required for the utilization of anhMurNAc either imported from the medium or derived from its own cell wall murein, and thus plays a role in cell wall recycling. The protein is Anhydro-N-acetylmuramic acid kinase of Ruegeria sp. (strain TM1040) (Silicibacter sp.).